Consider the following 394-residue polypeptide: Cell division protein FtsZ (394 aa).

GTP contacts are provided by residues 21–25 (GGGNN), R29, 108–110 (GTG), E139, R143, N166, and D187. The interval 317–394 (DKPSSQGRKA…EERRSRRTRR (78 aa)) is disordered. Composition is skewed to low complexity over residues 328 to 346 (STGF…SGAS) and 353 to 364 (SAHTSHSQSSES). A compositionally biased stretch (basic and acidic residues) spans 365 to 388 (VSERSHTTKDDDIPSFIRNREERR).

This sequence belongs to the FtsZ family. Homodimer. Polymerizes to form a dynamic ring structure in a strictly GTP-dependent manner. Interacts directly with several other division proteins.

Its subcellular location is the cytoplasm. Essential cell division protein that forms a contractile ring structure (Z ring) at the future cell division site. The regulation of the ring assembly controls the timing and the location of cell division. One of the functions of the FtsZ ring is to recruit other cell division proteins to the septum to produce a new cell wall between the dividing cells. Binds GTP and shows GTPase activity. The chain is Cell division protein FtsZ from Staphylococcus epidermidis (strain ATCC 35984 / DSM 28319 / BCRC 17069 / CCUG 31568 / BM 3577 / RP62A).